The primary structure comprises 348 residues: Anthranilate phosphoribosyltransferase (348 aa).

5-phospho-alpha-D-ribose 1-diphosphate contacts are provided by residues glycine 91, 94–95 (GD), threonine 99, 101–104 (NIST), 119–127 (KHGNRSASG), and serine 131. Glycine 91 serves as a coordination point for anthranilate. Serine 103 contacts Mg(2+). Asparagine 122 is an anthranilate binding site. Arginine 177 contributes to the anthranilate binding site. Mg(2+) contacts are provided by aspartate 236 and glutamate 237.

It belongs to the anthranilate phosphoribosyltransferase family. In terms of assembly, homodimer. Requires Mg(2+) as cofactor.

The catalysed reaction is N-(5-phospho-beta-D-ribosyl)anthranilate + diphosphate = 5-phospho-alpha-D-ribose 1-diphosphate + anthranilate. It participates in amino-acid biosynthesis; L-tryptophan biosynthesis; L-tryptophan from chorismate: step 2/5. In terms of biological role, catalyzes the transfer of the phosphoribosyl group of 5-phosphorylribose-1-pyrophosphate (PRPP) to anthranilate to yield N-(5'-phosphoribosyl)-anthranilate (PRA). This Synechococcus sp. (strain ATCC 27144 / PCC 6301 / SAUG 1402/1) (Anacystis nidulans) protein is Anthranilate phosphoribosyltransferase.